A 321-amino-acid polypeptide reads, in one-letter code: Protein translocase subunit SecF (321 aa).

Helical transmembrane passes span 23 to 43, 158 to 178, 189 to 209, 217 to 237, 258 to 280, and 290 to 312; these read VWLISGFAVLISFLGFFFSWT, LQTTLISLLVAFSCVAIYISI, LLALFHDVLIVCGVFSWLGII, LFAVALLTIAGYSVNDTVVVF, FAVSATLTRTLYTSGTTLLPLIA, and YWFAIALALGVVVGSWSSIALVP.

The protein belongs to the SecD/SecF family. SecF subfamily. In terms of assembly, forms a complex with SecD. Part of the essential Sec protein translocation apparatus which comprises SecA, SecYEG and auxiliary proteins SecDF. Other proteins may also be involved.

It localises to the cell inner membrane. In terms of biological role, part of the Sec protein translocase complex. Interacts with the SecYEG preprotein conducting channel. SecDF uses the proton motive force (PMF) to complete protein translocation after the ATP-dependent function of SecA. Functionally, probably participates in protein translocation into and across both the cytoplasmic and thylakoid membranes in cyanobacterial cells. The polypeptide is Protein translocase subunit SecF (Prochlorococcus marinus (strain SARG / CCMP1375 / SS120)).